We begin with the raw amino-acid sequence, 450 residues long: Probable ECA polymerase (450 aa).

The next 11 helical transmembrane spans lie at 6–26, 37–57, 63–83, 118–138, 155–175, 181–201, 207–227, 228–248, 341–361, 378–398, and 410–430; these read FSGL…LTWF, VFFS…TSVL, VGVA…CFYA, VILM…NGFL, GVAL…VYFL, AWLF…MIVG, IIIA…ISLW, MLAA…LKRY, LVVM…GLII, YKAA…IVLA, and VFFI…YWLF.

The protein belongs to the WzyE family. In terms of assembly, probably part of a complex composed of WzxE, WzyE and WzzE.

The protein resides in the cell inner membrane. It participates in bacterial outer membrane biogenesis; enterobacterial common antigen biosynthesis. Its function is as follows. Probably involved in the polymerization of enterobacterial common antigen (ECA) trisaccharide repeat units. This Escherichia coli O127:H6 (strain E2348/69 / EPEC) protein is Probable ECA polymerase.